We begin with the raw amino-acid sequence, 105 residues long: Met repressor (105 aa).

This sequence belongs to the MetJ family. In terms of assembly, homodimer.

It is found in the cytoplasm. Its function is as follows. This regulatory protein, when combined with SAM (S-adenosylmethionine) represses the expression of the methionine regulon and of enzymes involved in SAM synthesis. In Sodalis glossinidius (strain morsitans), this protein is Met repressor.